The chain runs to 416 residues: UDP-N-acetylglucosamine 1-carboxyvinyltransferase (416 aa).

22 to 23 (KN) is a phosphoenolpyruvate binding site. Arg-92 lines the UDP-N-acetyl-alpha-D-glucosamine pocket. Cys-116 acts as the Proton donor in catalysis. Cys-116 carries the 2-(S-cysteinyl)pyruvic acid O-phosphothioketal modification. UDP-N-acetyl-alpha-D-glucosamine is bound by residues 121-125 (RPVDQ), Asp-304, and Ile-326.

This sequence belongs to the EPSP synthase family. MurA subfamily.

Its subcellular location is the cytoplasm. It catalyses the reaction phosphoenolpyruvate + UDP-N-acetyl-alpha-D-glucosamine = UDP-N-acetyl-3-O-(1-carboxyvinyl)-alpha-D-glucosamine + phosphate. Its pathway is cell wall biogenesis; peptidoglycan biosynthesis. Functionally, cell wall formation. Adds enolpyruvyl to UDP-N-acetylglucosamine. The sequence is that of UDP-N-acetylglucosamine 1-carboxyvinyltransferase from Aromatoleum aromaticum (strain DSM 19018 / LMG 30748 / EbN1) (Azoarcus sp. (strain EbN1)).